The primary structure comprises 317 residues: Ret finger protein-like 3 (317 aa).

The RING-type zinc finger occupies 40-82 (CPVCSDYLEKPMSLECGCTVCLKCINSLQKEPHGEDLLCCCCS). The B30.2/SPRY domain occupies 107–301 (EPKLKKILQM…DQGVLSICPL (195 aa)).

As to expression, expressed during neurogenesis in differentiating human embryonic stem cells and in the developing human neocortex.

The protein resides in the cytoplasm. The protein localises to the nucleus. (Microbial infection) Stimulates the activity of Human Immunodeficiency Virus 1/HIV-1 pre-integration complex. This Homo sapiens (Human) protein is Ret finger protein-like 3 (RFPL3).